The following is a 386-amino-acid chain: Lipoyl synthase, mitochondrial (386 aa).

The transit peptide at 1 to 21 (MISRNSILLRRLYPTTIIRTL) directs the protein to the mitochondrion. C107, C112, C118, C137, C141, C144, and S352 together coordinate [4Fe-4S] cluster. The region spanning 122–341 (KKSEATATIM…RDTALDMGFL (220 aa)) is the Radical SAM core domain.

The protein belongs to the radical SAM superfamily. Lipoyl synthase family. [4Fe-4S] cluster is required as a cofactor.

It is found in the mitochondrion. It catalyses the reaction [[Fe-S] cluster scaffold protein carrying a second [4Fe-4S](2+) cluster] + N(6)-octanoyl-L-lysyl-[protein] + 2 oxidized [2Fe-2S]-[ferredoxin] + 2 S-adenosyl-L-methionine + 4 H(+) = [[Fe-S] cluster scaffold protein] + N(6)-[(R)-dihydrolipoyl]-L-lysyl-[protein] + 4 Fe(3+) + 2 hydrogen sulfide + 2 5'-deoxyadenosine + 2 L-methionine + 2 reduced [2Fe-2S]-[ferredoxin]. The protein operates within protein modification; protein lipoylation via endogenous pathway; protein N(6)-(lipoyl)lysine from octanoyl-[acyl-carrier-protein]: step 2/2. Functionally, catalyzes the radical-mediated insertion of two sulfur atoms into the C-6 and C-8 positions of the octanoyl moiety bound to the lipoyl domains of lipoate-dependent enzymes, thereby converting the octanoylated domains into lipoylated derivatives. This is Lipoyl synthase, mitochondrial (LAB5) from Candida albicans (strain SC5314 / ATCC MYA-2876) (Yeast).